A 102-amino-acid polypeptide reads, in one-letter code: uncharacterized protein (102 aa).

This is an uncharacterized protein from Sinorhizobium fredii (strain NBRC 101917 / NGR234).